The primary structure comprises 697 residues: MEKYEKTKVVGRGAFGIVHLCRRRTDSALVILKEIPVEQMTRDERLAAQNECQVLKLLSHPNIIEYYENFLEDKALMIAMEYAPGGTLADYIQKRCNSLLDEDTILHSFVQILLALYHVHNKLILHRDLKTQNILLDKHQMIVKIGDFGISKILVSKSKAYTVVGTPCYISPELCEGKPYNQKSDIWALGCVLYELASLKRAFEAANLPALVLKIMSGTFAPISDRYSPELRQLILNMLNLDPSKRPQLNEIMAHAICIRPLLNLYTDIGNVKMRRIEKPLSNVQAGPHGRPGGWITSTRTRGGLSSLTSSKMMHPLPLFSVYTWGSGISTPLRLPMLNTEVIQVSLGRTQKMGVTKSGRLITWEAPSVGSGEPTLPGAVEQMQPQFISRFLEGQSGVTIKSVSCGDLFTTCLTDRGIIMTFGSGSNGCLGHGNFNDVTQPKIVEALLGYELVQVSCGASHVLAVTNEREVFSWGRGDNGRLGLATQDSHNCPQQVSLPADFEAQRVLCGVDCSMIMSTQHQILACGNNRFNKLGLDKVSGTEEPSSFCQVEEVHLFQLVQSAPLNTEKIVYIDIGTAHSVAVTEKGQCFTFGSNQHGQLGCSHRRSSRVPYQVSGLQGITMAACGDAFTLAIGAEGEVYTWGKGARGRLGRKEEDFGIPKPVQLDESHAFTVTSVACCHGNTLLAVKPFFEEPGPK.

The Protein kinase domain maps to 4 to 263 (YEKTKVVGRG…AHAICIRPLL (260 aa)). Residues 10 to 18 (VGRGAFGIV) and Lys-33 contribute to the ATP site. Residue Asp-128 is the Proton acceptor of the active site. Phosphothreonine; by autocatalysis is present on Thr-162. 5 RCC1 repeats span residues 417–468 (GIIM…VTNE), 469–520 (REVF…MSTQ), 521–586 (HQIL…VTEK), 587–636 (GQCF…IGAE), and 637–689 (GEVY…AVKP).

The protein belongs to the protein kinase superfamily. NEK Ser/Thr protein kinase family. NIMA subfamily. The cofactor is Mg(2+).

It is found in the cytoplasm. The protein localises to the cytoskeleton. Its subcellular location is the cell projection. The protein resides in the cilium. It localises to the cilium axoneme. It is found in the microtubule organizing center. The protein localises to the centrosome. It carries out the reaction L-seryl-[protein] + ATP = O-phospho-L-seryl-[protein] + ADP + H(+). It catalyses the reaction L-threonyl-[protein] + ATP = O-phospho-L-threonyl-[protein] + ADP + H(+). Required for renal tubular integrity. May regulate local cytoskeletal structure in kidney tubule epithelial cells. May regulate ciliary biogenesis through targeting of proteins to the cilia. Plays a role in organogenesis and is involved in the regulation of the Hippo signaling pathway. The sequence is that of Serine/threonine-protein kinase Nek8 (nek8) from Danio rerio (Zebrafish).